The sequence spans 442 residues: UBX domain-containing protein 6 (442 aa).

The tract at residues 1 to 10 (MKKFFQEIKA) is mediates interaction with LMAN1. The segment at 13 to 111 (KFKSAGPGQK…TNSVPEPKEE (99 aa)) is disordered. Serine 36 carries the phosphoserine modification. Residues 51–63 (EAQMAAAAALARL) are VCP/p97-interacting motif (VIM). Over residues 52-61 (AQMAAAAALA) the composition is skewed to low complexity. The segment covering 90-105 (EATSSNNPGAPGTNSV) has biased composition (polar residues). Residues 175–244 (VDTIAKYLDN…GQEEFYVLGE (70 aa)) enclose the PUB domain. The UBX domain occupies 332-408 (RKYTYALVRV…GLVPSALLTF (77 aa)).

Interacts with VCP through the PUB domain (via C-terminus) and VIM motif (via N-terminus); the interaction is direct. Forms a ternary complex with CAV1 and VCP. Interacts with SYVN1. Interacts with HERPUD1. Interacts with VCPKMT. May interact with DERL1. Interacts with PLAA, VCP and YOD1; may form a complex involved in macroautophagy. Interacts with LMAN1. As to expression, widely expressed (at protein level). Highest expression in brain (at protein level).

It is found in the cytoplasm. It localises to the cytosol. The protein localises to the membrane. The protein resides in the nucleus. Its subcellular location is the cytoskeleton. It is found in the microtubule organizing center. It localises to the centrosome. The protein localises to the early endosome membrane. The protein resides in the late endosome membrane. Its subcellular location is the lysosome membrane. Its function is as follows. May negatively regulate the ATPase activity of VCP, an ATP-driven segregase that associates with different cofactors to control a wide variety of cellular processes. As a cofactor of VCP, it may play a role in the transport of CAV1 to lysosomes for degradation. It may also play a role in endoplasmic reticulum-associated degradation (ERAD) of misfolded proteins. Together with VCP and other cofactors, it may play a role in macroautophagy, regulating for instance the clearance of damaged lysosomes. The chain is UBX domain-containing protein 6 from Mus musculus (Mouse).